The sequence spans 514 residues: MRKKNVLLIVVDQWRADFVPHVLRADGKIDFLKTPNLDRLCREGVTFRNHVTTCVPCGPARASLLTGLYLMNHRAVQNTVPLDQRHLNLGKALRGVGYDPALIGYTTTVPDPRTTSPNDPRFRVLGDLMDGFHPVGAFEPNMEGYFGWVAQNGFDLPEHRPDIWLPEGEDAVAGATDRPSRIPKEFSDSTFFTERALTYLKGRDGKPFFLHLGYYRPHPPFVASAPYHAMYRPEDMPAPIRAANPDIEAAQHPLMKFYVDSIRRGSFFQGAEGSGATLDEAELRQMRATYCGLITEVDDCLGRVFSYLDETGQWDDTLIIFTSDHGEQLGDHHLLGKIGYNDPSFRIPLVIKDAGENARAGAIESGFTESIDVMPTILDWLGGKIPHACDGLSLLPFLSEGRPQDWRTELHYEYDFRDVYYSEPQSFLGLGMNDCSLCVIQDERYKYVHFAALPPLFFDLRHDPNEFTNLADDPAYAALVRDYAQKALSWRLKHADRTLTHYRSGPEGLSERSH.

Residues D12, C57, D324, and H325 each contribute to the Mn(2+) site. The active-site Nucleophile is the C57. C57 is modified (3-oxoalanine (Cys)).

The protein belongs to the alkaline phosphatase superfamily. Homotetramer. Mn(2+) serves as cofactor. The conversion to 3-oxoalanine (also known as C-formylglycine, FGly), of a serine or cysteine residue in prokaryotes and of a cysteine residue in eukaryotes, is critical for catalytic activity.

Its function is as follows. Hydrolytic enzyme with a broad substrate specificity acting on phosphate diesters and phosphonate monoesters. In Rhizobium johnstonii (strain DSM 114642 / LMG 32736 / 3841) (Rhizobium leguminosarum bv. viciae), this protein is Multifunctional alkaline phosphatase superfamily protein pRL90232.